We begin with the raw amino-acid sequence, 450 residues long: Growth/differentiation factor 7 (450 aa).

The first 19 residues, 1-19 (MDLSAAAALCLWLLSACRP), serve as a signal peptide directing secretion. Residues 20 to 321 (RDGLEAAAVL…AVIGGRRRRR (302 aa)) constitute a propeptide that is removed on maturation. N-linked (GlcNAc...) asparagine glycosylation is present at N83. Positions 296–349 (ASEPLPDPGTGTASPRAVIGGRRRRRTALAGTRTAQGSGGGAGRGHGRRGRSRC) are disordered. The span at 340 to 349 (GHGRRGRSRC) shows a compositional bias: basic residues. 3 disulfide bridges follow: C349/C415, C378/C447, and C382/C449.

The protein belongs to the TGF-beta family. In terms of assembly, homodimer; disulfide-linked.

It is found in the secreted. Functionally, may play an active role in the motor area of the primate neocortex. This is Growth/differentiation factor 7 (GDF7) from Homo sapiens (Human).